A 102-amino-acid polypeptide reads, in one-letter code: Inner membrane protein YaiY (102 aa).

Topologically, residues 1–24 (MADFTLSKSLFSGKYRNASSTPGN) are cytoplasmic. A helical transmembrane segment spans residues 25 to 45 (IAYALFVLFCFWAGAQLLNLL). Over 46–74 (VHAPGVYERLMQVQETGRPRVEIGLGVGT) the chain is Periplasmic. The helical transmembrane segment at 75 to 95 (IFGLIPFLVGCLIFAVVALWL) threads the bilayer. Over 96–102 (HWRHRRQ) the chain is Cytoplasmic.

It is found in the cell inner membrane. The chain is Inner membrane protein YaiY (yaiY) from Escherichia coli O157:H7.